The sequence spans 267 residues: Undecaprenyl-diphosphatase (267 aa).

The next 8 helical transmembrane spans lie at 5–25, 45–65, 82–102, 108–128, 143–163, 183–203, 213–233, and 243–263; these read TIVA…PVSS, FEVL…AGRL, ILAV…AHRI, FETP…LLFV, FPLP…IPGV, AAEF…VYDL, AATG…VVVV, and YGYG…LLAL.

Belongs to the UppP family.

The protein localises to the cell inner membrane. It catalyses the reaction di-trans,octa-cis-undecaprenyl diphosphate + H2O = di-trans,octa-cis-undecaprenyl phosphate + phosphate + H(+). Its function is as follows. Catalyzes the dephosphorylation of undecaprenyl diphosphate (UPP). Confers resistance to bacitracin. The sequence is that of Undecaprenyl-diphosphatase from Paracoccus denitrificans (strain Pd 1222).